The sequence spans 139 residues: Nucleoside diphosphate kinase (139 aa).

The ATP site is built by lysine 11, phenylalanine 59, arginine 87, threonine 93, arginine 104, and asparagine 114. Histidine 117 functions as the Pros-phosphohistidine intermediate in the catalytic mechanism.

It belongs to the NDK family. Homotetramer. Mg(2+) serves as cofactor.

The protein localises to the cytoplasm. It carries out the reaction a 2'-deoxyribonucleoside 5'-diphosphate + ATP = a 2'-deoxyribonucleoside 5'-triphosphate + ADP. It catalyses the reaction a ribonucleoside 5'-diphosphate + ATP = a ribonucleoside 5'-triphosphate + ADP. Functionally, major role in the synthesis of nucleoside triphosphates other than ATP. The ATP gamma phosphate is transferred to the NDP beta phosphate via a ping-pong mechanism, using a phosphorylated active-site intermediate. In Wolbachia sp. subsp. Brugia malayi (strain TRS), this protein is Nucleoside diphosphate kinase.